The chain runs to 89 residues: MPAPRYRSRSYRRIYRRTPGGRIVIHYKRRKPGKPKCAICGAELHGVPRGRPVEIRKLPKSQRRPERPYGGYLCPRCLKRLMIQKARNL.

Belongs to the eukaryotic ribosomal protein eL34 family.

The sequence is that of Large ribosomal subunit protein eL34 (rpl34e) from Methanocaldococcus jannaschii (strain ATCC 43067 / DSM 2661 / JAL-1 / JCM 10045 / NBRC 100440) (Methanococcus jannaschii).